Reading from the N-terminus, the 663-residue chain is Innate immunity activator protein (663 aa).

Residues 1–73 (MLQMPKLNEI…PGPGWDQCSP (73 aa)) form a disordered region. The span at 23–47 (EGRWAGPTGPEAARPARGARGQARG) shows a compositional bias: low complexity. The span at 50–59 (ARWDSWEHSR) shows a compositional bias: basic and acidic residues. Residues 117-147 (NAVRKQQRALEARLEACLEELRRLCLREAEL) are a coiled coil. The Nuclear localization signal (NLS) 1 motif lies at 164–170 (PKVRRRI). Disordered regions lie at residues 219–363 (RQRK…SSLW) and 375–405 (IRNV…QSLR). The segment covering 225 to 246 (ALQEEKKLRDLQRCLGDRRRNS) has biased composition (basic and acidic residues). Low complexity predominate over residues 259–272 (ELSASDDSSLSDGL). Over residues 282-298 (PKPPPESPAPPSRPLPP) the composition is skewed to pro residues. The segment covering 327–340 (TSLDHPYEKPRKSS) has biased composition (basic and acidic residues). The short motif at 332-338 (PYEKPRK) is the Nuclear localization signal (NLS) 2 element. Residues 349–361 (PATTPQDQPNPSS) show a composition bias toward polar residues. The short motif at 422–428 (PRRRPTH) is the Nuclear localization signal (NLS) 3 element. A disordered region spans residues 448–483 (PACHSCSEDSGSDVSSISHPTSPGSSSPDISFLRPL). The segment covering 455 to 475 (EDSGSDVSSISHPTSPGSSSP) has biased composition (low complexity).

Interacts with IRAK1, NOD2 and RIPK2; the interaction takes place upon PRR stimulation. Interacts with YWHAQ/14-3-3T; the interaction increases upon PRR stimulation and is required for cellular signaling pathway activation and cytokine secretion. Interacts (via N-terminal domain) with CYTH1 and CYTH2 (via their N-terminal domains). Interacts with FBXW11 and BTRC; associates with SCF E3 ubiquitin-protein ligase complexes.

It is found in the nucleus. The protein localises to the cytoplasm. In terms of biological role, expressed in peripheral macrophages and intestinal myeloid-derived cells, is required for optimal PRR (pattern recognition receptor)-induced signaling, cytokine secretion, and bacterial clearance. Upon stimulation of a broad range of PRRs (pattern recognition receptor) such as NOD2 or TLR2, TLR3, TLR4, TLR5, TLR7 and TLR9, associates with YWHAQ/14-3-3T, which in turn leads to the recruitment and activation of MAP kinases and NF-kappa-B signaling complexes that amplifies PRR-induced downstream signals and cytokine secretion. In the intestine, regulates adherens junction stability by regulating the degradation of CYTH1 and CYTH2, probably acting as substrate cofactor for SCF E3 ubiquitin-protein ligase complexes. Stabilizes adherens junctions by limiting CYTH1-dependent ARF6 activation. The polypeptide is Innate immunity activator protein (Mus musculus (Mouse)).